Reading from the N-terminus, the 132-residue chain is Small ribosomal subunit protein uS8 (132 aa).

This sequence belongs to the universal ribosomal protein uS8 family. In terms of assembly, part of the 30S ribosomal subunit. Contacts proteins S5 and S12.

Its function is as follows. One of the primary rRNA binding proteins, it binds directly to 16S rRNA central domain where it helps coordinate assembly of the platform of the 30S subunit. The sequence is that of Small ribosomal subunit protein uS8 from Bartonella tribocorum (strain CIP 105476 / IBS 506).